A 953-amino-acid polypeptide reads, in one-letter code: MDAFKEEIEIGSSVESLMELLDSQKVLFHSQIDQLQDVVVAQCKLTGVNPLAQEMAAGALSIKIGKRPRDLLNPKAVKYLQAVFAIKDAISKRESREISALFGITVAQVREFFVTQKTRVRKQVRLSREKVVMSNTHALQDDGVPENNNATNHVEPVPLNSIHPEACSISWGEGETVALIPPEDIPPDISDSDKYFVENIFSLLRKEETFSGQVKLMEWIMQIQDASVLIWFLSKGGVLILTTWLSQAASEEQTSVLLLILKVLCHLPLHKASPENMSAILQSVNGLRFYRISDISNRAKGLLSRWTKLFAKIQAMKKQNRNSSQIDSQSQLLLKQSIAEIMGDSSNPEDILSLSNGKSENVRRIESSQGPKLLLTSADDSTKKHMLGSNPSYNKERRKVQMVEQPGQKAAGKSPQTVRIGTSGRSRPMSADDIQKAKMRALYMQSKNSKKDPLPSAIGDSKIVAPEKPLALHSAKDSPPIQNNEAKTEDTPVLSTVQPVNGFSTIQPVNGPSAVQPVNGPLAVQPVNGPSALQPVNGPSAVIVPVQADEIKKPSTPPKSISSKVGVMMKMSSQTILKNCKRKQIDWHVPPGMELDELWRVAAGGNSKEADVQRNRNRRERETTYQSLQTIPLNPKEPWDREMDYDDSLTPEIPSQQPPEESLTEPQDSLDERRIAAGAATTSSSLSSPEPDLELLAALLKNPDLVYALTSGKPSNLAGQDMVKLLDVIKTGAPNSSSSSNKQVEERVEVSLPSPTPSTNPGMSGWGQEGIRNPFSRQNQVGTAVARSGTQLRVGSMQWHQTNEQSIPRHAPSAYSNSITLAHTEREQQQYMQPKLHHNLHFQQQQQQPISTTSYAVREPVGQMGTGTSSSWRSQQSQNSYYSHQENEIASASQVTSYQGNSQYMSSNPGYESWSPDNSPSRNQLNMRGQQQQASRKHDSSTHPYWNQNKRWR.

Positions 63-123 (KIGKRPRDLL…VTQKTRVRKQ (61 aa)) form a DNA-binding region, homeobox. A disordered region spans residues 404–430 (EQPGQKAAGKSPQTVRIGTSGRSRPMS). The span at 414 to 425 (SPQTVRIGTSGR) shows a compositional bias: polar residues. 5 consecutive repeat copies span residues 498 to 502 (QPVNG), 507 to 511 (QPVNG), 516 to 520 (QPVNG), 525 to 529 (QPVNG), and 534 to 538 (QPVNG). A 5 X 5 AA repeats of Q-P-V-N-G region spans residues 498–538 (QPVNGFSTIQPVNGPSAVQPVNGPLAVQPVNGPSALQPVNG). Disordered stretches follow at residues 606–668 (NSKE…EPQD), 733–763 (APNS…NPGM), and 861–953 (VGQM…KRWR). The span at 608–623 (KEADVQRNRNRRERET) shows a compositional bias: basic and acidic residues. A compositionally biased stretch (low complexity) spans 651 to 661 (PEIPSQQPPEE). Residues 733–742 (APNSSSSSNK) show a composition bias toward polar residues. A compositionally biased stretch (low complexity) spans 869-884 (SSSWRSQQSQNSYYSH). 2 stretches are compositionally biased toward polar residues: residues 888–934 (EIAS…QQQA) and 942–953 (THPYWNQNKRWR).

Interacts with SUF4. Expressed in shoot apex, root apex, leaf primordia and floral buds.

The protein resides in the nucleus. In terms of biological role, seems to play a role in the regulation of flowering time in the autonomous flowering pathway by repressing FLOWERING LOCUS C expression. In Arabidopsis thaliana (Mouse-ear cress), this protein is Homeobox protein LUMINIDEPENDENS (LD).